Reading from the N-terminus, the 417-residue chain is MSSEKASSKSTPEAPWPVREVNTQVKQWIERLGHLWVEGQLAQINVKPNWKLSYLTLRDVEQEMSVQLTCPTDIIRNRPTPLKDGDRVIVYGKPAFYAGRGTFSLWVTDIRPVGIGELLARIEELRKRLAAEGLFDPARKKRLPFLPNRVGLITGRGSAAERDVLSVAKDRWPEVQFEVINTAVQGASAVPEIIEALRVLDQDPRVDVIIIARGGGSVEDLLPFSEEALQRAVAAAQTPVVSAIGHEPDTPVLDNVADLRAATPTDAAKRVVPDVAEERMLINQLRSRSAAALRGWVQREQQALAAIRTRPVLADPMTPINRRRDEIAQAVGLIRRDVTHLVRTEQALVASLRAQVSALGPSATLARGYSVVQVIPRDGSAPEVVTTIEQSPPGSQLRIRVADGSITAASMGTQQAN.

This sequence belongs to the XseA family. In terms of assembly, heterooligomer composed of large and small subunits.

Its subcellular location is the cytoplasm. The enzyme catalyses Exonucleolytic cleavage in either 5'- to 3'- or 3'- to 5'-direction to yield nucleoside 5'-phosphates.. Bidirectionally degrades single-stranded DNA into large acid-insoluble oligonucleotides, which are then degraded further into small acid-soluble oligonucleotides. The sequence is that of Exodeoxyribonuclease 7 large subunit from Corynebacterium glutamicum (strain ATCC 13032 / DSM 20300 / JCM 1318 / BCRC 11384 / CCUG 27702 / LMG 3730 / NBRC 12168 / NCIMB 10025 / NRRL B-2784 / 534).